The chain runs to 338 residues: Phenylalanine--tRNA ligase alpha subunit (338 aa).

Mg(2+) is bound at residue glutamate 253.

It belongs to the class-II aminoacyl-tRNA synthetase family. Phe-tRNA synthetase alpha subunit type 1 subfamily. As to quaternary structure, tetramer of two alpha and two beta subunits. It depends on Mg(2+) as a cofactor.

Its subcellular location is the cytoplasm. It catalyses the reaction tRNA(Phe) + L-phenylalanine + ATP = L-phenylalanyl-tRNA(Phe) + AMP + diphosphate + H(+). This chain is Phenylalanine--tRNA ligase alpha subunit, found in Syntrophus aciditrophicus (strain SB).